The following is a 589-amino-acid chain: Putative ABC transporter ATP-binding protein MG015 (589 aa).

6 helical membrane-spanning segments follow: residues 9–29 (LLYVFLCIVLGILYGIANPIL), 66–86 (LTIVSVTVFVAYALIFVFNVA), 161–181 (LIFLLSPVIALISLSILATLI), 251–271 (IFLFSWFGFISNITYLVSISI), 280–300 (IPSFGISVINYSFMLSYIASL), and 303–323 (ITLALDQIFTLWNLVQLGVVS). An ABC transmembrane type-1 domain is found at 9-319 (LLYVFLCIVL…IFTLWNLVQL (311 aa)). The 235-residue stretch at 352–586 (IRFENVAFGY…NGFYARLKQS (235 aa)) folds into the ABC transporter domain. ATP is bound at residue 385–392 (GPTGAGKS).

Belongs to the ABC transporter superfamily.

It is found in the cell membrane. This Mycoplasma genitalium (strain ATCC 33530 / DSM 19775 / NCTC 10195 / G37) (Mycoplasmoides genitalium) protein is Putative ABC transporter ATP-binding protein MG015.